The sequence spans 303 residues: Lipoyl synthase (303 aa).

Residues C34, C39, C45, C60, C64, C67, and S273 each coordinate [4Fe-4S] cluster. Residues 46-262 (WSKKHATVMI…ERVARTKGFL (217 aa)) form the Radical SAM core domain.

The protein belongs to the radical SAM superfamily. Lipoyl synthase family. It depends on [4Fe-4S] cluster as a cofactor.

The protein resides in the cytoplasm. It carries out the reaction [[Fe-S] cluster scaffold protein carrying a second [4Fe-4S](2+) cluster] + N(6)-octanoyl-L-lysyl-[protein] + 2 oxidized [2Fe-2S]-[ferredoxin] + 2 S-adenosyl-L-methionine + 4 H(+) = [[Fe-S] cluster scaffold protein] + N(6)-[(R)-dihydrolipoyl]-L-lysyl-[protein] + 4 Fe(3+) + 2 hydrogen sulfide + 2 5'-deoxyadenosine + 2 L-methionine + 2 reduced [2Fe-2S]-[ferredoxin]. It functions in the pathway protein modification; protein lipoylation via endogenous pathway; protein N(6)-(lipoyl)lysine from octanoyl-[acyl-carrier-protein]: step 2/2. In terms of biological role, catalyzes the radical-mediated insertion of two sulfur atoms into the C-6 and C-8 positions of the octanoyl moiety bound to the lipoyl domains of lipoate-dependent enzymes, thereby converting the octanoylated domains into lipoylated derivatives. The sequence is that of Lipoyl synthase from Rickettsia bellii (strain OSU 85-389).